Here is a 455-residue protein sequence, read N- to C-terminus: Kynurenine 3-monooxygenase (455 aa).

Belongs to the aromatic-ring hydroxylase family. KMO subfamily. The cofactor is FAD.

The catalysed reaction is L-kynurenine + NADPH + O2 + H(+) = 3-hydroxy-L-kynurenine + NADP(+) + H2O. Its pathway is cofactor biosynthesis; NAD(+) biosynthesis; quinolinate from L-kynurenine: step 1/3. Its function is as follows. Catalyzes the hydroxylation of L-kynurenine (L-Kyn) to form 3-hydroxy-L-kynurenine (L-3OHKyn). Required for synthesis of quinolinic acid. The chain is Kynurenine 3-monooxygenase from Xanthomonas oryzae pv. oryzae (strain MAFF 311018).